The primary structure comprises 40 residues: Photosystem II reaction center protein J (40 aa).

A helical transmembrane segment spans residues 8–28; the sequence is IPLWLVGTVTGTLVIGLMGIF.

This sequence belongs to the PsbJ family. PSII is composed of 1 copy each of membrane proteins PsbA, PsbB, PsbC, PsbD, PsbE, PsbF, PsbH, PsbI, PsbJ, PsbK, PsbL, PsbM, PsbT, PsbX, PsbY, PsbZ, Psb30/Ycf12, at least 3 peripheral proteins of the oxygen-evolving complex and a large number of cofactors. It forms dimeric complexes.

It is found in the plastid. The protein localises to the chloroplast thylakoid membrane. One of the components of the core complex of photosystem II (PSII). PSII is a light-driven water:plastoquinone oxidoreductase that uses light energy to abstract electrons from H(2)O, generating O(2) and a proton gradient subsequently used for ATP formation. It consists of a core antenna complex that captures photons, and an electron transfer chain that converts photonic excitation into a charge separation. The polypeptide is Photosystem II reaction center protein J (Psilotum nudum (Whisk fern)).